The primary structure comprises 208 residues: MSKVLFIKANDRPVEQATSVKLYEAFTKAYKETHPNDEIVELDLFAENLPYYGNDMLTAMWKAGNGIELSADEQKRADLVNKYLNQFTAADKVVFAFPMWNFTVPAVLHSYMDYLSQAGKTFKYTAEGPVGLMGDKKVALLSARGGVYSEGPMAQMEMANKYVRTILGFWGVNNVTEVIVEGHNQFQDKAAELVAAGVEKAVKLAESF.

99–102 (MWNF) lines the FMN pocket.

Belongs to the azoreductase type 1 family. In terms of assembly, homodimer. It depends on FMN as a cofactor.

The catalysed reaction is 2 a quinone + NADH + H(+) = 2 a 1,4-benzosemiquinone + NAD(+). It carries out the reaction N,N-dimethyl-1,4-phenylenediamine + anthranilate + 2 NAD(+) = 2-(4-dimethylaminophenyl)diazenylbenzoate + 2 NADH + 2 H(+). Its function is as follows. Quinone reductase that provides resistance to thiol-specific stress caused by electrophilic quinones. In terms of biological role, also exhibits azoreductase activity. Catalyzes the reductive cleavage of the azo bond in aromatic azo compounds to the corresponding amines. The chain is FMN-dependent NADH:quinone oxidoreductase from Brevibacillus brevis (strain 47 / JCM 6285 / NBRC 100599).